A 557-amino-acid polypeptide reads, in one-letter code: ADP-ribosylation factor-binding protein GGA1 (557 aa).

The VHS domain maps to 29–165 (ACRSTLPEPD…LLKYKGYTFP (137 aa)). One can recognise a GAT domain in the interval 192-317 (ERAQAAKLEE…LLKRYKSIKG (126 aa)). Thr-348 is subject to Phosphothreonine. 4 positions are modified to phosphoserine: Ser-353, Ser-357, Ser-378, and Ser-394. In terms of domain architecture, GAE spans 440-556 (AQSQRHILNQ…EESGTTSLPT (117 aa)).

As to quaternary structure, binds to ARF1 and ARF2.

Its subcellular location is the golgi apparatus. The protein localises to the trans-Golgi network. In terms of biological role, may play a role in the regulation of membrane traffic through the trans-Golgi network. This chain is ADP-ribosylation factor-binding protein GGA1 (GGA1), found in Saccharomyces cerevisiae (strain ATCC 204508 / S288c) (Baker's yeast).